Here is a 131-residue protein sequence, read N- to C-terminus: Glycine cleavage system H protein (131 aa).

Residues 24–106 (VYCVGITEHA…YTDGWLFKIK (83 aa)) form the Lipoyl-binding domain. The residue at position 65 (K65) is an N6-lipoyllysine.

The protein belongs to the GcvH family. The glycine cleavage system is composed of four proteins: P, T, L and H. The cofactor is (R)-lipoate.

Its function is as follows. The glycine cleavage system catalyzes the degradation of glycine. The H protein shuttles the methylamine group of glycine from the P protein to the T protein. This chain is Glycine cleavage system H protein, found in Sodalis glossinidius (strain morsitans).